The following is a 475-amino-acid chain: MHFETVIGLEVHVELKTDSKMFSPSPAHFGAEPNSNTNVIDLAYPGVLPVVNKRAVDWAMRAAMALNMEIATESKFDRKNYFYPDNPKAYQISQFDQPIGENGYIDIEVDGETKRIGITRLHMEEDAGKSTHKGEYSLVDLNRQGTPLIEIVSEPDIRSPIEAYAYLEKLRSIIQYTGVSDVKMEEGSLRCDANISLRPYGQEKFGTKAELKNLNSFNYVRKGLEYEEKRQEEELLNGGEIGQETRRFDESTGKTILMRVKEGSDDYRYFPEPDIVPLYIDDAWKKRVRQTIPELPDERKAKYVNELGLPAYDAHVLTLTKEMSDFFESTIEHGADVKLTSNWLMGGVNEYLNKNQVELLDTKLTPENLAGMIKLIEDGTMSSKIAKKVFPELAAKGGNAKQIMEDNGLVQISDEATLLKFVNEALDNNEQSVEDYKNGKGKAMGFLVGQIMKASKGQANPQLVNQLLKQELDKR.

The protein belongs to the GatB/GatE family. GatB subfamily. Heterotrimer of A, B and C subunits.

It catalyses the reaction L-glutamyl-tRNA(Gln) + L-glutamine + ATP + H2O = L-glutaminyl-tRNA(Gln) + L-glutamate + ADP + phosphate + H(+). The enzyme catalyses L-aspartyl-tRNA(Asn) + L-glutamine + ATP + H2O = L-asparaginyl-tRNA(Asn) + L-glutamate + ADP + phosphate + 2 H(+). Functionally, allows the formation of correctly charged Asn-tRNA(Asn) or Gln-tRNA(Gln) through the transamidation of misacylated Asp-tRNA(Asn) or Glu-tRNA(Gln) in organisms which lack either or both of asparaginyl-tRNA or glutaminyl-tRNA synthetases. The reaction takes place in the presence of glutamine and ATP through an activated phospho-Asp-tRNA(Asn) or phospho-Glu-tRNA(Gln). The protein is Aspartyl/glutamyl-tRNA(Asn/Gln) amidotransferase subunit B of Staphylococcus aureus (strain bovine RF122 / ET3-1).